The following is a 224-amino-acid chain: Claudin-19 (224 aa).

Residues 1 to 7 are Cytoplasmic-facing; the sequence is MANSGLQ. A helical transmembrane segment spans residues 8-28; the sequence is LLGYFLALGGWVGIIASTALP. Over 29-81 the chain is Extracellular; the sequence is QWKQSSYAGDAIITAVGLYEGLWMSCASQSTGQVQCKLYDSLLALDGHIQSAR. An intrachain disulfide couples Cys54 to Cys64. A helical transmembrane segment spans residues 82–102; it reads ALMVVAVLLGFVAMVLSVVGM. Topologically, residues 103–117 are cytoplasmic; the sequence is KCTRVGDSNPIAKGR. A helical transmembrane segment spans residues 118–138; the sequence is VAIAGGALFILAGLCTLTAVS. Over 139-160 the chain is Extracellular; it reads WYATLVTQEFFNPSTPVNARYE. A helical transmembrane segment spans residues 161–181; sequence FGPALFVGWASAGLAVLGGSF. At 182 to 224 the chain is on the cytoplasmic side; sequence LCCTCPEPERPNSSPQPYRPGPSAAAREPVVKLPASAKGPLGV. Positions 191-224 are disordered; sequence RPNSSPQPYRPGPSAAAREPVVKLPASAKGPLGV.

It belongs to the claudin family. In terms of assembly, can form homo- and heteropolymeric tight junction strands. Interacts with other claudins including CLDN3, CLDN10, CLDN16 and CLDN18 with highest affinity for CLDN16. Interacts (via PDZ-binding motif TRV) with TJP1 (via PDZ domain).

Its subcellular location is the cell junction. The protein resides in the tight junction. It localises to the cell membrane. It catalyses the reaction Mg(2+)(in) = Mg(2+)(out). It carries out the reaction Ca(2+)(in) = Ca(2+)(out). The catalysed reaction is Na(+)(in) = Na(+)(out). The enzyme catalyses K(+)(in) = K(+)(out). It catalyses the reaction Rb(+)(in) = Rb(+)(out). It carries out the reaction Cs(+)(in) = Cs(+)(out). The catalysed reaction is Li(+)(in) = Li(+)(out). Functionally, forms paracellular channels: coassembles with CLDN16 into tight junction strands with cation-selective channels through the strands, conveying epithelial permeability in a process known as paracellular tight junction permeability. Involved in the maintenance of ion gradients along the nephron. In the thick ascending limb (TAL) of Henle's loop, facilitates sodium paracellular permeability from the interstitial compartment to the lumen, contributing to the lumen-positive transepithelial potential that drives paracellular magnesium and calcium reabsorption. Forms paracellular barriers on its own. In the peripheral nervous system, represents a major constituent of the tight junctions in Schwann cells and contributes to electrical sealing. During retinal neurogenesis, may regulate the barrier properties of tight junctions in retinal pigment epithelium, required for proper retinal tissue differentiation and vision. The polypeptide is Claudin-19 (Homo sapiens (Human)).